The chain runs to 174 residues: Myosin regulatory light chain sqh (174 aa).

Residue threonine 21 is modified to Phosphothreonine. Residue serine 22 is modified to Phosphoserine. EF-hand domains are found at residues alanine 31–asparagine 66 and aspartate 100–arginine 135. Ca(2+) contacts are provided by aspartate 44, asparagine 46, aspartate 48, and aspartate 55.

As to quaternary structure, myosin is a hexamer of 2 heavy chains and 4 light chains. Post-translationally, phosphorylation plays a central role in myosin regulation.

Functionally, required for cytokinesis, could regulate contractile ring function. In Drosophila melanogaster (Fruit fly), this protein is Myosin regulatory light chain sqh (sqh).